The sequence spans 552 residues: Glutamine--tRNA ligase (552 aa).

The 'HIGH' region signature appears at 34–44; the sequence is PEPNGYLHIGH. Residues 35–37 and 41–47 each bind ATP; these read EPN and HIGHAKS. L-glutamine-binding residues include aspartate 67 and tyrosine 212. ATP-binding positions include threonine 231, 261–262, and 269–271; these read RL and MSK. The 'KMSKS' region signature appears at 268–272; sequence VMSKR.

This sequence belongs to the class-I aminoacyl-tRNA synthetase family. As to quaternary structure, monomer.

It is found in the cytoplasm. The catalysed reaction is tRNA(Gln) + L-glutamine + ATP = L-glutaminyl-tRNA(Gln) + AMP + diphosphate. This chain is Glutamine--tRNA ligase, found in Aliivibrio fischeri (strain MJ11) (Vibrio fischeri).